The primary structure comprises 282 residues: Pantothenate synthetase (282 aa).

33 to 40 provides a ligand contact to ATP; sequence MGALHAGH. Residue H40 is the Proton donor of the active site. Q64 serves as a coordination point for (R)-pantoate. Beta-alanine is bound at residue Q64. 150 to 153 lines the ATP pocket; that stretch reads GEKD. (R)-pantoate is bound at residue Q156. Residues V179 and 187–190 each bind ATP; that span reads LSSR.

This sequence belongs to the pantothenate synthetase family. Homodimer.

The protein localises to the cytoplasm. It carries out the reaction (R)-pantoate + beta-alanine + ATP = (R)-pantothenate + AMP + diphosphate + H(+). It functions in the pathway cofactor biosynthesis; (R)-pantothenate biosynthesis; (R)-pantothenate from (R)-pantoate and beta-alanine: step 1/1. Functionally, catalyzes the condensation of pantoate with beta-alanine in an ATP-dependent reaction via a pantoyl-adenylate intermediate. This chain is Pantothenate synthetase, found in Rhodospirillum rubrum (strain ATCC 11170 / ATH 1.1.1 / DSM 467 / LMG 4362 / NCIMB 8255 / S1).